Reading from the N-terminus, the 149-residue chain is D-aminoacyl-tRNA deacylase (149 aa).

A Gly-cisPro motif, important for rejection of L-amino acids motif is present at residues 137-138; sequence GP.

This sequence belongs to the DTD family. As to quaternary structure, homodimer.

The protein resides in the cytoplasm. It catalyses the reaction glycyl-tRNA(Ala) + H2O = tRNA(Ala) + glycine + H(+). It carries out the reaction a D-aminoacyl-tRNA + H2O = a tRNA + a D-alpha-amino acid + H(+). In terms of biological role, an aminoacyl-tRNA editing enzyme that deacylates mischarged D-aminoacyl-tRNAs. Also deacylates mischarged glycyl-tRNA(Ala), protecting cells against glycine mischarging by AlaRS. Acts via tRNA-based rather than protein-based catalysis; rejects L-amino acids rather than detecting D-amino acids in the active site. By recycling D-aminoacyl-tRNA to D-amino acids and free tRNA molecules, this enzyme counteracts the toxicity associated with the formation of D-aminoacyl-tRNA entities in vivo and helps enforce protein L-homochirality. The protein is D-aminoacyl-tRNA deacylase of Syntrophotalea carbinolica (strain DSM 2380 / NBRC 103641 / GraBd1) (Pelobacter carbinolicus).